A 300-amino-acid polypeptide reads, in one-letter code: C-4 methylsterol oxidase erg25 (300 aa).

One can recognise a Fatty acid hydroxylase domain in the interval 140 to 276 (TLFFFLEDTW…FRWWDAVLKT (137 aa)). The Histidine box-1 signature appears at 154–158 (HRLFH). The short motif at 167–171 (HKVHH) is the Histidine box-2 element. Residues 186 to 206 (PLEIILLGAGTVFVPLMWCYF) traverse the membrane as a helical segment. The Histidine box-3 signature appears at 251-257 (HHDYHHM).

It belongs to the sterol desaturase family. In terms of assembly, heterotetramer of erg25, erg26, erg27 and erg28. Erg28 acts as a scaffold to tether erg27 and other 4,4-demethylation-related enzymes, forming a demethylation enzyme complex, in the endoplasmic reticulum. Fe cation is required as a cofactor.

Its subcellular location is the endoplasmic reticulum membrane. The enzyme catalyses 4,4-dimethyl-5alpha-cholesta-8,24-dien-3beta-ol + 6 Fe(II)-[cytochrome b5] + 3 O2 + 5 H(+) = 4beta-methylzymosterol-4alpha-carboxylate + 6 Fe(III)-[cytochrome b5] + 4 H2O. It carries out the reaction 4alpha-methylzymosterol + 6 Fe(II)-[cytochrome b5] + 3 O2 + 5 H(+) = 4alpha-carboxyzymosterol + 6 Fe(III)-[cytochrome b5] + 4 H2O. It functions in the pathway steroid biosynthesis; zymosterol biosynthesis; zymosterol from lanosterol: step 3/6. It participates in steroid metabolism; ergosterol biosynthesis. In terms of biological role, C-4 methylsterol oxidase; part of the third module of ergosterol biosynthesis pathway that includes by the late steps of the pathway. Erg25 is a catalytic component of the C-4 demethylation complex that catalyzes the three-step monooxygenation required for the demethylation of 4,4-dimethyl and 4alpha-methylsterols. The third module or late pathway involves the ergosterol synthesis itself through consecutive reactions that mainly occur in the endoplasmic reticulum (ER) membrane. Firstly, the squalene synthase erg9 catalyzes the condensation of 2 farnesyl pyrophosphate moieties to form squalene, which is the precursor of all steroids. Secondly, squalene is converted into lanosterol by the consecutive action of the squalene epoxidase erg1 and the lanosterol synthase erg7. The lanosterol 14-alpha-demethylase erg11/cyp1 catalyzes C14-demethylation of lanosterol to produce 4,4'-dimethyl cholesta-8,14,24-triene-3-beta-ol. In the next steps, a complex process involving various demethylation, reduction and desaturation reactions catalyzed by the C-14 reductase erg24 and the C-4 demethylation complex erg25-erg26-erg27 leads to the production of zymosterol. Erg28 likely functions in the C-4 demethylation complex reaction by tethering erg26 and Erg27 to the endoplasmic reticulum or to facilitate interaction between these proteins. Then, the sterol 24-C-methyltransferase erg6 catalyzes the methyl transfer from S-adenosyl-methionine to the C-24 of zymosterol to form fecosterol. The C-8 sterol isomerase erg2 catalyzes the reaction which results in unsaturation at C-7 in the B ring of sterols and thus converts fecosterol to episterol. The sterol-C5-desaturases erg31 and erg32 then catalyze the introduction of a C-5 double bond in the B ring to produce 5-dehydroepisterol. The C-22 sterol desaturase erg5 further converts 5-dehydroepisterol into ergosta-5,7,22,24(28)-tetraen-3beta-ol by forming the C-22(23) double bond in the sterol side chain. Finally, ergosta-5,7,22,24(28)-tetraen-3beta-ol is substrate of the C-24(28) sterol reductase erg4 to produce ergosterol. In the genus Schizosaccharomyces, a second route exists between lanosterol and fecosterol, via the methylation of lanosterol to eburicol by erg6, followed by C14-demethylation by erg11/cyp1 and C4-demethylation by the demethylation complex erg25-erg26-erg27. The polypeptide is C-4 methylsterol oxidase erg25 (Schizosaccharomyces pombe (strain 972 / ATCC 24843) (Fission yeast)).